A 490-amino-acid polypeptide reads, in one-letter code: Mitochondrial-processing peptidase subunit beta (490 aa).

The transit peptide at Met1 to Thr46 directs the protein to the mitochondrion. His102 is a Zn(2+) binding site. Glu105 functions as the Proton acceptor in the catalytic mechanism. His106 and Glu182 together coordinate Zn(2+).

This sequence belongs to the peptidase M16 family. As to quaternary structure, heterodimer of PMPCA (alpha) and PMPCB (beta) subunits, forming the mitochondrial processing protease (MPP) in which PMPCA is involved in substrate recognition and binding and PMPCB is the catalytic subunit. The cofactor is Zn(2+).

The protein resides in the mitochondrion matrix. It carries out the reaction Release of N-terminal transit peptides from precursor proteins imported into the mitochondrion, typically with Arg in position P2.. Its activity is regulated as follows. Binding to PMPCA is required for catalytic activity. Functionally, catalytic subunit of the essential mitochondrial processing protease (MPP), which cleaves the mitochondrial sequence off newly imported precursors proteins. Preferentially, cleaves after an arginine at position P2. Required for PINK1 turnover by coupling PINK1 mitochondrial import and cleavage, which results in subsequent PINK1 proteolysis. The polypeptide is Mitochondrial-processing peptidase subunit beta (PMPCB) (Bos taurus (Bovine)).